The following is a 500-amino-acid chain: NAD(P)H-quinone oxidoreductase chain 4, chloroplastic (500 aa).

14 helical membrane-spanning segments follow: residues 3 to 23 (FFPW…LIFF), 37 to 57 (ICIC…HFQL), 87 to 107 (IGPI…AWPI), 113 to 130 (LFHF…GSFS), 134 to 154 (LLLF…LLSM), 167 to 187 (FILY…GMGL), 208 to 228 (ALEI…SPII), 242 to 262 (HYST…YGLV), 272 to 292 (AHSI…IYAA), 305 to 325 (IAYS…SITD), 330 to 350 (GAVL…FLAG), 386 to 406 (LALP…GIIT), 416 to 436 (ILIT…SLSM), and 462 to 482 (LFVS…PDFV).

This sequence belongs to the complex I subunit 4 family.

The protein localises to the plastid. Its subcellular location is the chloroplast thylakoid membrane. The catalysed reaction is a plastoquinone + NADH + (n+1) H(+)(in) = a plastoquinol + NAD(+) + n H(+)(out). It catalyses the reaction a plastoquinone + NADPH + (n+1) H(+)(in) = a plastoquinol + NADP(+) + n H(+)(out). The protein is NAD(P)H-quinone oxidoreductase chain 4, chloroplastic of Platanus occidentalis (Sycamore).